The following is a 1241-amino-acid chain: ATP-dependent helicase/nuclease subunit A (1241 aa).

The UvrD-like helicase ATP-binding domain maps to 12 to 485; that stretch reads SQWTDDQWKA…IDLAKNFRSR (474 aa). 33–40 contributes to the ATP binding site; it reads AAAGSGKT. In terms of domain architecture, UvrD-like helicase C-terminal spans 505 to 805; that stretch reads GEIDYDADAE…RIMTIHKSKG (301 aa).

Belongs to the helicase family. AddA subfamily. As to quaternary structure, heterodimer of AddA and AddB/RexB. Mg(2+) is required as a cofactor.

The catalysed reaction is Couples ATP hydrolysis with the unwinding of duplex DNA by translocating in the 3'-5' direction.. It catalyses the reaction ATP + H2O = ADP + phosphate + H(+). The heterodimer acts as both an ATP-dependent DNA helicase and an ATP-dependent, dual-direction single-stranded exonuclease. Recognizes the chi site generating a DNA molecule suitable for the initiation of homologous recombination. The AddA nuclease domain is required for chi fragment generation; this subunit has the helicase and 3' -&gt; 5' nuclease activities. This chain is ATP-dependent helicase/nuclease subunit A, found in Bacillus cereus (strain AH187).